Consider the following 44-residue polypeptide: MRDLKTYLSVAPVLSTLWFGALAGLLIEINRLFPDALTFPFFSF.

The chain crosses the membrane as a helical span at residues 7-27; the sequence is YLSVAPVLSTLWFGALAGLLI.

It belongs to the PsaJ family.

The protein resides in the plastid. It localises to the chloroplast thylakoid membrane. May help in the organization of the PsaE and PsaF subunits. The protein is Photosystem I reaction center subunit IX of Eucalyptus globulus subsp. globulus (Tasmanian blue gum).